We begin with the raw amino-acid sequence, 411 residues long: Pyridinium-3,5-bisthiocarboxylic acid mononucleotide nickel insertion protein (411 aa).

Belongs to the LarC family.

The enzyme catalyses Ni(II)-pyridinium-3,5-bisthiocarboxylate mononucleotide = pyridinium-3,5-bisthiocarboxylate mononucleotide + Ni(2+). Involved in the biosynthesis of a nickel-pincer cofactor ((SCS)Ni(II) pincer complex). Binds Ni(2+), and functions in nickel delivery to pyridinium-3,5-bisthiocarboxylic acid mononucleotide (P2TMN), to form the mature cofactor. Is thus probably required for the activation of nickel-pincer cofactor-dependent enzymes. This Geobacillus kaustophilus (strain HTA426) protein is Pyridinium-3,5-bisthiocarboxylic acid mononucleotide nickel insertion protein.